Reading from the N-terminus, the 485-residue chain is Cysteine--tRNA ligase (485 aa).

Residue Cys27 participates in Zn(2+) binding. The 'HIGH' region motif lies at 29–39 (ITAYDLCHLGH). Zn(2+)-binding residues include Cys208, His233, and Glu237. A 'KMSKS' region motif is present at residues 265–269 (KMSKS). Residue Lys268 coordinates ATP.

This sequence belongs to the class-I aminoacyl-tRNA synthetase family. In terms of assembly, monomer. It depends on Zn(2+) as a cofactor.

It localises to the cytoplasm. The enzyme catalyses tRNA(Cys) + L-cysteine + ATP = L-cysteinyl-tRNA(Cys) + AMP + diphosphate. The sequence is that of Cysteine--tRNA ligase from Oleidesulfovibrio alaskensis (strain ATCC BAA-1058 / DSM 17464 / G20) (Desulfovibrio alaskensis).